Reading from the N-terminus, the 306-residue chain is UDP-N-acetylenolpyruvoylglucosamine reductase (306 aa).

Residues 34–198 (VGGPADLLIT…LEVTFKLHNS (165 aa)) enclose the FAD-binding PCMH-type domain. Arginine 177 is an active-site residue. Residue serine 227 is the Proton donor of the active site. Residue glutamate 297 is part of the active site.

The protein belongs to the MurB family. The cofactor is FAD.

It localises to the cytoplasm. It catalyses the reaction UDP-N-acetyl-alpha-D-muramate + NADP(+) = UDP-N-acetyl-3-O-(1-carboxyvinyl)-alpha-D-glucosamine + NADPH + H(+). The protein operates within cell wall biogenesis; peptidoglycan biosynthesis. Functionally, cell wall formation. This is UDP-N-acetylenolpyruvoylglucosamine reductase from Clostridium botulinum (strain ATCC 19397 / Type A).